The sequence spans 276 residues: Rhamnulose-1-phosphate aldolase (276 aa).

The active site involves glutamate 117. Positions 141, 143, and 212 each coordinate Zn(2+).

The protein belongs to the aldolase class II family. RhaD subfamily. As to quaternary structure, homotetramer. Requires Zn(2+) as cofactor.

It localises to the cytoplasm. The catalysed reaction is L-rhamnulose 1-phosphate = (S)-lactaldehyde + dihydroxyacetone phosphate. It functions in the pathway carbohydrate degradation; L-rhamnose degradation; glycerone phosphate from L-rhamnose: step 3/3. Catalyzes the reversible cleavage of L-rhamnulose-1-phosphate to dihydroxyacetone phosphate (DHAP) and L-lactaldehyde. This chain is Rhamnulose-1-phosphate aldolase, found in Klebsiella pneumoniae (strain 342).